Reading from the N-terminus, the 268-residue chain is MERYENLFAQLNDRREGAFVPFVTLGDPGIEQSLKIIDTLIDAGADALELGVPFSDPLADGPTIQNANLRAFAAGVTPAQCFEMLALIREKHPTIPIGLLMYANLVFNNGIDAFYARCEQVGVDSVLVADVPVEESAPFRQAALRHNIAPIFICPPNADDDLLRQVASYGRGYTYLLSRSGVTGAENRGALPLHHLIEKLKEYHAAPALQGFGISSPEQVSAAVRAGAAGAISGSAIVKIIEKNLASPEQMLAELRSFVSAMKAASRA.

Active-site proton acceptor residues include Glu-49 and Asp-60.

Belongs to the TrpA family. Tetramer of two alpha and two beta chains.

The catalysed reaction is (1S,2R)-1-C-(indol-3-yl)glycerol 3-phosphate + L-serine = D-glyceraldehyde 3-phosphate + L-tryptophan + H2O. The protein operates within amino-acid biosynthesis; L-tryptophan biosynthesis; L-tryptophan from chorismate: step 5/5. Functionally, the alpha subunit is responsible for the aldol cleavage of indoleglycerol phosphate to indole and glyceraldehyde 3-phosphate. The protein is Tryptophan synthase alpha chain of Salmonella agona (strain SL483).